We begin with the raw amino-acid sequence, 56 residues long: Serine protease inhibitor Kazal-type 1 (56 aa).

The Kazal-like domain occupies 3–56; the sequence is PQREATCTSEVSGCPKIYNPVCGTDGITYSNECVLCSENKKRQTPVLIQKSGPC. 3 disulfide bridges follow: Cys9-Cys38, Cys16-Cys35, and Cys24-Cys56.

It is found in the secreted. Serine protease inhibitor which exhibits anti-trypsin activity. In the pancreas, protects against trypsin-catalyzed premature activation of zymogens. In terms of biological role, in the male reproductive tract, binds to sperm heads where it modulates sperm capacitance by inhibiting calcium uptake and nitrogen oxide (NO) production. This chain is Serine protease inhibitor Kazal-type 1 (SPINK1), found in Sus scrofa (Pig).